The following is a 220-amino-acid chain: Translation initiation factor 6 (220 aa).

It belongs to the eIF-6 family.

Functionally, binds to the 50S ribosomal subunit and prevents its association with the 30S ribosomal subunit to form the 70S initiation complex. This chain is Translation initiation factor 6, found in Methanoculleus marisnigri (strain ATCC 35101 / DSM 1498 / JR1).